Here is a 251-residue protein sequence, read N- to C-terminus: CCN family member 5 (251 aa).

Residues 1-23 (MRGNPLIHLLAISFLCILSMVYS) form the signal peptide. One can recognise an IGFBP N-terminal domain in the interval 24-103 (QLCPAPCACP…EEDDGSCEVN (80 aa)). 6 disulfides stabilise this stretch: Cys-26/Cys-50, Cys-30/Cys-52, Cys-32/Cys-53, Cys-39/Cys-56, Cys-64/Cys-78, and Cys-70/Cys-100. One can recognise a VWFC domain in the interval 98–164 (GSCEVNGRRY…GRCCPEWVCD (67 aa)). The 45-residue stretch at 195-239 (CPNWSTAWGPCSTTCGLGIATRVSNQNRFCQLEIQRRLCLSRPCL) folds into the TSP type-1 domain. An N-linked (GlcNAc...) asparagine glycan is attached at Asn-197.

The protein belongs to the CCN family.

It localises to the secreted. In terms of biological role, may play an important role in modulating bone turnover. Promotes the adhesion of osteoblast cells and inhibits the binding of fibrinogen to integrin receptors. In addition, inhibits osteocalcin production. This is CCN family member 5 (Ccn5) from Mus musculus (Mouse).